A 476-amino-acid polypeptide reads, in one-letter code: Aspartyl/glutamyl-tRNA(Asn/Gln) amidotransferase subunit B (476 aa).

This sequence belongs to the GatB/GatE family. GatB subfamily. As to quaternary structure, heterotrimer of A, B and C subunits.

It carries out the reaction L-glutamyl-tRNA(Gln) + L-glutamine + ATP + H2O = L-glutaminyl-tRNA(Gln) + L-glutamate + ADP + phosphate + H(+). The enzyme catalyses L-aspartyl-tRNA(Asn) + L-glutamine + ATP + H2O = L-asparaginyl-tRNA(Asn) + L-glutamate + ADP + phosphate + 2 H(+). Its function is as follows. Allows the formation of correctly charged Asn-tRNA(Asn) or Gln-tRNA(Gln) through the transamidation of misacylated Asp-tRNA(Asn) or Glu-tRNA(Gln) in organisms which lack either or both of asparaginyl-tRNA or glutaminyl-tRNA synthetases. The reaction takes place in the presence of glutamine and ATP through an activated phospho-Asp-tRNA(Asn) or phospho-Glu-tRNA(Gln). In Clostridium botulinum (strain Okra / Type B1), this protein is Aspartyl/glutamyl-tRNA(Asn/Gln) amidotransferase subunit B.